The following is a 248-amino-acid chain: MKRLKGLLVLALGFTGLQVFGQQNPDIKIEKLKDNLYVYTTYNTFKGTKYAANAVYMVTDKGVVVIDSPWGEDKFKSFTDEIYKKHGKKVIMNIATHSHDDRAGGLEYFGKLGAKTYSTKMTDSILAKENKPRAKYTFDNNKSFKVGNTEFQVYYPGKGHTADNVVVWFPKDKVLVGGCIVKSGDSKDLGFIGEAYVNDWTQSIHNIQQKFPDVQYVVAGHDDWKDQTSIQHTLDLISEYQQKQKASN.

An N-terminal signal peptide occupies residues 1–21 (MKRLKGLLVLALGFTGLQVFG). H97, H99, D101, H160, and C179 together coordinate Zn(2+). K182 provides a ligand contact to substrate. A Zn(2+)-binding site is contributed by H221.

This sequence belongs to the metallo-beta-lactamase superfamily. Class-B beta-lactamase family. Monomer. Zn(2+) is required as a cofactor.

The protein localises to the periplasm. It catalyses the reaction a beta-lactam + H2O = a substituted beta-amino acid. Confers resistance to the different beta-lactams antibiotics (penicillin, cephalosporin and carbapenem) via the hydrolysis of the beta-lactam ring. This is Metallo-beta-lactamase type 2 (blaB6) from Elizabethkingia meningoseptica (Chryseobacterium meningosepticum).